A 119-amino-acid polypeptide reads, in one-letter code: Large ribosomal subunit protein uL24 (119 aa).

It belongs to the universal ribosomal protein uL24 family. As to quaternary structure, part of the 50S ribosomal subunit.

Its function is as follows. One of two assembly initiator proteins, it binds directly to the 5'-end of the 23S rRNA, where it nucleates assembly of the 50S subunit. Functionally, one of the proteins that surrounds the polypeptide exit tunnel on the outside of the subunit. The polypeptide is Large ribosomal subunit protein uL24 (Leptospira interrogans serogroup Icterohaemorrhagiae serovar copenhageni (strain Fiocruz L1-130)).